The primary structure comprises 326 residues: Apoptosis facilitator Bcl-2-like protein 14 (326 aa).

At S44 the chain carries Phosphoserine. Residues A100–A147 form a disordered region. Positions S137–A147 are enriched in basic and acidic residues. Positions I211–E225 match the BH3 motif. The BH2 signature appears at W307–W314.

It belongs to the Bcl-2 family. Phosphorylated by MELK, leading to inhibit its pro-apoptotic function.

The protein resides in the cytoplasm. Its function is as follows. Plays a role in apoptosis. The protein is Apoptosis facilitator Bcl-2-like protein 14 (BCL2L14) of Bos taurus (Bovine).